The following is a 271-amino-acid chain: Mannosyl-3-phosphoglycerate phosphatase (271 aa).

Asp13 (nucleophile) is an active-site residue. The Mg(2+) site is built by Asp13, Asp15, and Asp214.

This sequence belongs to the HAD-like hydrolase superfamily. MPGP family. It depends on Mg(2+) as a cofactor.

Its subcellular location is the cytoplasm. The catalysed reaction is 2-O-(alpha-D-mannosyl)-3-phosphoglycerate + H2O = (2R)-2-O-(alpha-D-mannosyl)-glycerate + phosphate. The chain is Mannosyl-3-phosphoglycerate phosphatase (yedP) from Shigella dysenteriae serotype 1 (strain Sd197).